A 263-amino-acid polypeptide reads, in one-letter code: uncharacterized protein (263 aa).

ATP is bound at residue Gly31 to Thr38.

The protein belongs to the CbbQ/NirQ/NorQ/GpvN family.

This is an uncharacterized protein from Staphylococcus aureus (strain NCTC 8325 / PS 47).